Reading from the N-terminus, the 247-residue chain is Neurotrophic factor BDNF precursor form (247 aa).

The first 18 residues, 1-18, serve as a signal peptide directing secretion; sequence MTILFLTMVISYFGCMKA. A propeptide spanning residues 19–128 is cleaved from the precursor; it reads APMKEANARG…AANMSMRVRR (110 aa). Asparagine 121 is a glycosylation site (N-linked (GlcNAc...) asparagine). 3 cysteine pairs are disulfide-bonded: cysteine 141–cysteine 208, cysteine 186–cysteine 237, and cysteine 196–cysteine 239.

This sequence belongs to the NGF-beta family. In terms of assembly, monomers and homodimers. Binds to NTRK2/TRKB. Can form heterodimers with other neurotrophin family members, such as NTF3 and NTF4 (in vitro), but the physiological relevance of this is not clear. BDNF precursor form: interacts with the heterodimer formed by NGFR and SORCS2. Mature BDNF has much lower affinity for the heterodimer formed by NGFR and SORCS2. N-glycosylated and glycosulfated, contrary to mature BDNF. In terms of processing, mature BDNF is produced by proteolytic removal of the propeptide, catalyzed by a FURIN family member. In addition, the precursor form is proteolytically cleaved within the propeptide, but this is not an obligatory intermediate for the production of mature BDNF. Can be converted into mature BDNF by plasmin (PLG).

Its subcellular location is the secreted. In terms of biological role, important signaling molecule that activates signaling cascades downstream of NTRK2. During development, promotes the survival and differentiation of selected neuronal populations of the peripheral and central nervous systems. Participates in axonal growth, pathfinding and in the modulation of dendritic growth and morphology. Major regulator of synaptic transmission and plasticity at adult synapses in many regions of the CNS. The versatility of BDNF is emphasized by its contribution to a range of adaptive neuronal responses including long-term potentiation (LTP), long-term depression (LTD), certain forms of short-term synaptic plasticity, as well as homeostatic regulation of intrinsic neuronal excitability. Important signaling molecule that activates signaling cascades downstream of NTRK2. Activates signaling cascades via the heterodimeric receptor formed by NGFR and SORCS2. Signaling via NGFR and SORCS2 plays a role in synaptic plasticity and long-term depression (LTD). Binding to NGFR and SORCS2 promotes neuronal apoptosis. Promotes neuronal growth cone collapse. In Equus caballus (Horse), this protein is Neurotrophic factor BDNF precursor form (BDNF).